Reading from the N-terminus, the 1171-residue chain is ATP-dependent helicase/deoxyribonuclease subunit B (1171 aa).

The region spanning 1–343 (MSLRFVIGRA…LVAEENYRYR (343 aa)) is the UvrD-like helicase ATP-binding domain. 8–15 (GRAGSGKS) contacts ATP. The region spanning 281–587 (MEQPRFHSPA…QFANIPPSLD (307 aa)) is the UvrD-like helicase C-terminal domain. 4 residues coordinate [4Fe-4S] cluster: Cys-805, Cys-1129, Cys-1132, and Cys-1138.

This sequence belongs to the helicase family. AddB/RexB type 1 subfamily. As to quaternary structure, heterodimer of AddA and AddB. Requires Mg(2+) as cofactor. [4Fe-4S] cluster is required as a cofactor.

Functionally, the heterodimer acts as both an ATP-dependent DNA helicase and an ATP-dependent, dual-direction single-stranded exonuclease. Recognizes the chi site generating a DNA molecule suitable for the initiation of homologous recombination. The AddB subunit has 5' -&gt; 3' nuclease activity but not helicase activity. The sequence is that of ATP-dependent helicase/deoxyribonuclease subunit B from Bacillus anthracis.